Reading from the N-terminus, the 485-residue chain is Inosine-5'-monophosphate dehydrogenase (485 aa).

2 CBS domains span residues 95–154 and 155–215; these read VITN…IDDV and MTKE…AKDS. Residues aspartate 249 and 299–301 contribute to the NAD(+) site; that span reads GIG. 2 residues coordinate K(+): glycine 301 and glycine 303. Serine 304 lines the IMP pocket. Cysteine 306 provides a ligand contact to K(+). Cysteine 306 (thioimidate intermediate) is an active-site residue. Residues 339-341, 362-363, and 386-390 each bind IMP; these read DGG, GS, and YRGMG. Residue arginine 402 is the Proton acceptor of the active site. Residue glutamate 414 participates in IMP binding. The K(+) site is built by glutamate 468, serine 469, and histidine 470.

Belongs to the IMPDH/GMPR family. As to quaternary structure, homotetramer. K(+) is required as a cofactor.

It catalyses the reaction IMP + NAD(+) + H2O = XMP + NADH + H(+). The protein operates within purine metabolism; XMP biosynthesis via de novo pathway; XMP from IMP: step 1/1. Mycophenolic acid (MPA) is a non-competitive inhibitor that prevents formation of the closed enzyme conformation by binding to the same site as the amobile flap. In contrast, mizoribine monophosphate (MZP) is a competitive inhibitor that induces the closed conformation. MPA is a potent inhibitor of mammalian IMPDHs but a poor inhibitor of the bacterial enzymes. MZP is a more potent inhibitor of bacterial IMPDH. In terms of biological role, catalyzes the conversion of inosine 5'-phosphate (IMP) to xanthosine 5'-phosphate (XMP), the first committed and rate-limiting step in the de novo synthesis of guanine nucleotides, and therefore plays an important role in the regulation of cell growth. This chain is Inosine-5'-monophosphate dehydrogenase, found in Halalkalibacterium halodurans (strain ATCC BAA-125 / DSM 18197 / FERM 7344 / JCM 9153 / C-125) (Bacillus halodurans).